A 236-amino-acid polypeptide reads, in one-letter code: Small ribosomal subunit protein uS5 (236 aa).

Residues 1–10 (MTENNEKDIQ) show a composition bias toward basic and acidic residues. A disordered region spans residues 1–64 (MTENNEKDIQ…GRDGGREAEK (64 aa)). Residues 11–27 (VTEAVAAPATETAAPAT) show a composition bias toward low complexity. Positions 28-64 (TDDRRGGARRGERGDRGQGRGDRGGRGGRDGGREAEK) are enriched in basic and acidic residues. Residues 67–130 (FVERVVTINR…EEAKKSFFRV (64 aa)) enclose the S5 DRBM domain.

The protein belongs to the universal ribosomal protein uS5 family. In terms of assembly, part of the 30S ribosomal subunit. Contacts proteins S4 and S8.

Its function is as follows. With S4 and S12 plays an important role in translational accuracy. Functionally, located at the back of the 30S subunit body where it stabilizes the conformation of the head with respect to the body. The protein is Small ribosomal subunit protein uS5 of Arthrobacter sp. (strain FB24).